A 296-amino-acid chain; its full sequence is Transmembrane O-methyltransferase (296 aa).

The chain crosses the membrane as a helical span at residues 36–56 (VGTMSPAIALAFLPLVVTLLV). S-adenosyl-L-methionine-binding positions include Glu-142, 144-145 (GT), Ser-150, Glu-168, and Ser-198.

It belongs to the class I-like SAM-binding methyltransferase superfamily. Cation-dependent O-methyltransferase family. As to quaternary structure, interacts with LHFPL5, PCDH15, TMC1, TMC2 and TMIE. Interacts directly with TMC1. The interaction of TOMT with TMC1 and TMC2 is required for the transportation of TMC1/2 into the stereocilia of hair cells.

Its subcellular location is the membrane. It localises to the cytoplasm. The protein localises to the endoplasmic reticulum. The enzyme catalyses a catechol + S-adenosyl-L-methionine = a guaiacol + S-adenosyl-L-homocysteine + H(+). In terms of biological role, catalyzes the O-methylation, and thereby the inactivation, of catecholamine neurotransmitters and catechol hormones. Required for auditory function. Component of the cochlear hair cell's mechanotransduction (MET) machinery. Involved in the assembly of the asymmetric tip-link MET complex. Required for transportation of TMC1 and TMC2 proteins into the mechanically sensitive stereocilia of the hair cells. The function in MET is independent of the enzymatic activity. This is Transmembrane O-methyltransferase from Macaca mulatta (Rhesus macaque).